A 297-amino-acid chain; its full sequence is 3-methyl-2-oxobutanoate hydroxymethyltransferase (297 aa).

Residues 1–12 show a composition bias toward polar residues; sequence MSEQISEQSEQN. Residues 1–36 are disordered; that stretch reads MSEQISEQSEQNVYGACPPVPAGESSPSAASAPRTK. Residues 22–33 are compositionally biased toward low complexity; that stretch reads AGESSPSAASAP. Mg(2+) contacts are provided by aspartate 78 and aspartate 117. 3-methyl-2-oxobutanoate-binding positions include 78-79, aspartate 117, and lysine 147; that span reads DS. A Mg(2+)-binding site is contributed by glutamate 149. Catalysis depends on glutamate 215, which acts as the Proton acceptor.

It belongs to the PanB family. In terms of assembly, homodecamer; pentamer of dimers. Mg(2+) is required as a cofactor.

Its subcellular location is the cytoplasm. It catalyses the reaction 3-methyl-2-oxobutanoate + (6R)-5,10-methylene-5,6,7,8-tetrahydrofolate + H2O = 2-dehydropantoate + (6S)-5,6,7,8-tetrahydrofolate. It participates in cofactor biosynthesis; (R)-pantothenate biosynthesis; (R)-pantoate from 3-methyl-2-oxobutanoate: step 1/2. In terms of biological role, catalyzes the reversible reaction in which hydroxymethyl group from 5,10-methylenetetrahydrofolate is transferred onto alpha-ketoisovalerate to form ketopantoate. The chain is 3-methyl-2-oxobutanoate hydroxymethyltransferase from Mycobacterium ulcerans (strain Agy99).